Consider the following 184-residue polypeptide: dCTP deaminase (184 aa).

DCTP is bound by residues 107–112 (KSTYAR), 131–133 (TLE), Gln152, Tyr166, and Gln176. Glu133 serves as the catalytic Proton donor/acceptor.

The protein belongs to the dCTP deaminase family. Homotrimer.

It carries out the reaction dCTP + H2O + H(+) = dUTP + NH4(+). It participates in pyrimidine metabolism; dUMP biosynthesis; dUMP from dCTP (dUTP route): step 1/2. Functionally, catalyzes the deamination of dCTP to dUTP. In Rhizorhabdus wittichii (strain DSM 6014 / CCUG 31198 / JCM 15750 / NBRC 105917 / EY 4224 / RW1) (Sphingomonas wittichii), this protein is dCTP deaminase.